The primary structure comprises 788 residues: Cell division cycle protein 27 homolog (788 aa).

The disordered stretch occupies residues 198 to 436 (YLDSPASSLK…PLPSVASSLN (239 aa)). Residues 217-229 (GPSSSSAASTAEP) are compositionally biased toward low complexity. Composition is skewed to polar residues over residues 241-273 (RGTI…SRIN), 293-303 (SSVTGSRSSLF), and 319-360 (NRAN…NPVR). Low complexity predominate over residues 366–378 (ADAAAAANKTAKT). Positions 391–414 (VSRNSNLARSLSGSTNSVASTASE) are enriched in polar residues. TPR repeat units lie at residues 561–594 (PQSW…DKRF), 596–628 (YAYT…SPRD), 629–662 (YRAW…NPTN), 664–696 (AMLC…NPLD), and 731–764 (AFIF…DPRG).

The protein belongs to the APC3/CDC27 family. The APC/C complex is probably composed of at least 12 subunits: apc-2, apc-10, apc-11, cdc-26, emb-1, emb-27, emb-30, mat-1, mat-2, mat-3, such-1 and gfi-3. As to expression, expressed in the ventral nerve cord.

The protein resides in the nucleus. Its pathway is protein modification; protein ubiquitination. Functionally, probable component of the anaphase promoting complex/cyclosome (APC/C), a cell cycle-regulated E3 ubiquitin ligase that controls progression through mitosis and the G1 phase of the cell cycle. The APC/C complex acts by mediating ubiquitination and subsequent degradation of target proteins. Developmental role in early embryogenesis and the metaphase to anaphase transition in oocyte and spermatocyte meiosis and mitosis in germ cells. Required for embryonic anterior-posterior axis formation. Plays a role in regulating the abundance of glr-1 receptors in postmitotic neurons, which may in turn control animal locomotion. This chain is Cell division cycle protein 27 homolog, found in Caenorhabditis elegans.